The chain runs to 597 residues: Elongation factor 4 (597 aa).

One can recognise a tr-type G domain in the interval aspartate 2–lysine 184. GTP is bound by residues aspartate 14–threonine 19 and asparagine 131–aspartate 134.

This sequence belongs to the TRAFAC class translation factor GTPase superfamily. Classic translation factor GTPase family. LepA subfamily.

It localises to the cell inner membrane. The enzyme catalyses GTP + H2O = GDP + phosphate + H(+). Functionally, required for accurate and efficient protein synthesis under certain stress conditions. May act as a fidelity factor of the translation reaction, by catalyzing a one-codon backward translocation of tRNAs on improperly translocated ribosomes. Back-translocation proceeds from a post-translocation (POST) complex to a pre-translocation (PRE) complex, thus giving elongation factor G a second chance to translocate the tRNAs correctly. Binds to ribosomes in a GTP-dependent manner. This is Elongation factor 4 from Cupriavidus pinatubonensis (strain JMP 134 / LMG 1197) (Cupriavidus necator (strain JMP 134)).